We begin with the raw amino-acid sequence, 956 residues long: Bifunctional glutamine synthetase adenylyltransferase/adenylyl-removing enzyme (956 aa).

The tract at residues 1 to 441 is adenylyl removase; the sequence is MLPLSTPLLA…IFTQLIGDDS (441 aa). The adenylyl transferase stretch occupies residues 450-956; the sequence is HVPFKSLWLE…RRSWQQWLGE (507 aa).

Belongs to the GlnE family. Mg(2+) is required as a cofactor.

The enzyme catalyses [glutamine synthetase]-O(4)-(5'-adenylyl)-L-tyrosine + phosphate = [glutamine synthetase]-L-tyrosine + ADP. The catalysed reaction is [glutamine synthetase]-L-tyrosine + ATP = [glutamine synthetase]-O(4)-(5'-adenylyl)-L-tyrosine + diphosphate. In terms of biological role, involved in the regulation of glutamine synthetase GlnA, a key enzyme in the process to assimilate ammonia. When cellular nitrogen levels are high, the C-terminal adenylyl transferase (AT) inactivates GlnA by covalent transfer of an adenylyl group from ATP to specific tyrosine residue of GlnA, thus reducing its activity. Conversely, when nitrogen levels are low, the N-terminal adenylyl removase (AR) activates GlnA by removing the adenylyl group by phosphorolysis, increasing its activity. The regulatory region of GlnE binds the signal transduction protein PII (GlnB) which indicates the nitrogen status of the cell. In Photorhabdus laumondii subsp. laumondii (strain DSM 15139 / CIP 105565 / TT01) (Photorhabdus luminescens subsp. laumondii), this protein is Bifunctional glutamine synthetase adenylyltransferase/adenylyl-removing enzyme.